The chain runs to 590 residues: uncharacterized protein (590 aa).

Disordered stretches follow at residues 306–329 (IAEP…GIPY) and 528–590 (QPAP…LMNL). A compositionally biased stretch (pro residues) spans 543 to 563 (PSLPQPVPEPLAPQEPPPPGT).

This is an uncharacterized protein from Ictaluridae (bullhead catfishes).